Consider the following 211-residue polypeptide: Large ribosomal subunit protein eL13 (211 aa).

Lys-16 is subject to N6-acetyllysine. Phosphoserine is present on residues Ser-52 and Ser-77. Glycyl lysine isopeptide (Lys-Gly) (interchain with G-Cter in SUMO2) cross-links involve residues Lys-123 and Lys-145. Lys-174 is covalently cross-linked (Glycyl lysine isopeptide (Lys-Gly) (interchain with G-Cter in SUMO1); alternate). Residues Lys-174 and Lys-177 each participate in a glycyl lysine isopeptide (Lys-Gly) (interchain with G-Cter in SUMO2); alternate cross-link. An N6-acetyllysine; alternate modification is found at Lys-177.

This sequence belongs to the eukaryotic ribosomal protein eL13 family. Component of the 60S large ribosomal subunit (LSU).

The protein localises to the cytoplasm. Functionally, component of the ribosome, a large ribonucleoprotein complex responsible for the synthesis of proteins in the cell. The small ribosomal subunit (SSU) binds messenger RNAs (mRNAs) and translates the encoded message by selecting cognate aminoacyl-transfer RNA (tRNA) molecules. The large subunit (LSU) contains the ribosomal catalytic site termed the peptidyl transferase center (PTC), which catalyzes the formation of peptide bonds, thereby polymerizing the amino acids delivered by tRNAs into a polypeptide chain. The nascent polypeptides leave the ribosome through a tunnel in the LSU and interact with protein factors that function in enzymatic processing, targeting, and the membrane insertion of nascent chains at the exit of the ribosomal tunnel. As part of the LSU, it is probably required for its formation and the maturation of rRNAs. Plays a role in bone development. The protein is Large ribosomal subunit protein eL13 (RPL13) of Bos taurus (Bovine).